A 417-amino-acid polypeptide reads, in one-letter code: MRVVILGSGVVGVSTAWYLAQEGHDVTVIDRQPEPALETSAGNAGQISPGYAAPWAAPGIPLKAIKWMFQRHAPLAIRPDFTAAQLCWMWQMLLNCDARHYKTNKARMVRLAEYSRDCLQQLRRDTGIQYEGRQGGTLQLFRTEQQYDNATRDIAVLEEAGVPYQLLTRHELASVEPALANVAEKLTGGLRLPHDETGDCQLFTRQLAAMAADAGVTFKLGRHVRQLRVEGQNVTGVQCDDEMIVADAYVMACGSYSTGLLRQWFDIPVYPLKGYSLTIPLADDASAPVSTVLDETYKVAITRFDRRIRVGGMAEVVGFNTDLNPKRRETLEMVVRDLYPHCGPIEQATFWTGLRPMTPDGTPLVGRSPLKNLYLNTGHGTLGWTMACGSGKLLADILSDKSPEIEANDLSVERYVR.

FAD is bound at residue 3-17; that stretch reads VVILGSGVVGVSTAW.

The protein belongs to the DadA oxidoreductase family. FAD is required as a cofactor.

It carries out the reaction a D-alpha-amino acid + A + H2O = a 2-oxocarboxylate + AH2 + NH4(+). It functions in the pathway amino-acid degradation; D-alanine degradation; NH(3) and pyruvate from D-alanine: step 1/1. Its function is as follows. Oxidative deamination of D-amino acids. The sequence is that of D-amino acid dehydrogenase from Pectobacterium carotovorum subsp. carotovorum (strain PC1).